The primary structure comprises 482 residues: tRNA sulfurtransferase (482 aa).

The THUMP domain maps to 61 to 165 (SAIRDALTRI…QDRLLLIKGR (105 aa)). Residues 183–184 (LI), K265, G287, and Q296 contribute to the ATP site. A disulfide bridge links C344 with C456. Positions 404–482 (FAPTDVLLDI…GFSNVKVYRP (79 aa)) constitute a Rhodanese domain. The active-site Cysteine persulfide intermediate is the C456.

Belongs to the ThiI family.

It is found in the cytoplasm. The enzyme catalyses [ThiI sulfur-carrier protein]-S-sulfanyl-L-cysteine + a uridine in tRNA + 2 reduced [2Fe-2S]-[ferredoxin] + ATP + H(+) = [ThiI sulfur-carrier protein]-L-cysteine + a 4-thiouridine in tRNA + 2 oxidized [2Fe-2S]-[ferredoxin] + AMP + diphosphate. The catalysed reaction is [ThiS sulfur-carrier protein]-C-terminal Gly-Gly-AMP + S-sulfanyl-L-cysteinyl-[cysteine desulfurase] + AH2 = [ThiS sulfur-carrier protein]-C-terminal-Gly-aminoethanethioate + L-cysteinyl-[cysteine desulfurase] + A + AMP + 2 H(+). It participates in cofactor biosynthesis; thiamine diphosphate biosynthesis. Functionally, catalyzes the ATP-dependent transfer of a sulfur to tRNA to produce 4-thiouridine in position 8 of tRNAs, which functions as a near-UV photosensor. Also catalyzes the transfer of sulfur to the sulfur carrier protein ThiS, forming ThiS-thiocarboxylate. This is a step in the synthesis of thiazole, in the thiamine biosynthesis pathway. The sulfur is donated as persulfide by IscS. This chain is tRNA sulfurtransferase, found in Pectobacterium carotovorum subsp. carotovorum (strain PC1).